We begin with the raw amino-acid sequence, 122 residues long: Large ribosomal subunit protein bL12 (122 aa).

Belongs to the bacterial ribosomal protein bL12 family. Homodimer. Part of the ribosomal stalk of the 50S ribosomal subunit. Forms a multimeric L10(L12)X complex, where L10 forms an elongated spine to which 2 to 4 L12 dimers bind in a sequential fashion. Binds GTP-bound translation factors.

Functionally, forms part of the ribosomal stalk which helps the ribosome interact with GTP-bound translation factors. Is thus essential for accurate translation. In Borrelia hermsii (strain HS1 / DAH), this protein is Large ribosomal subunit protein bL12.